The sequence spans 48 residues: Large ribosomal subunit protein bL33B (48 aa).

This sequence belongs to the bacterial ribosomal protein bL33 family.

The sequence is that of Large ribosomal subunit protein bL33B from Lactococcus lactis subsp. cremoris (strain MG1363).